Reading from the N-terminus, the 77-residue chain is Large ribosomal subunit protein bL28 (77 aa).

The protein belongs to the bacterial ribosomal protein bL28 family.

This chain is Large ribosomal subunit protein bL28, found in Variovorax paradoxus (strain S110).